The chain runs to 247 residues: Reticulon-like protein B8 (247 aa).

The region spanning 61–247 is the Reticulon domain; sequence SADVLLWRNK…SGKFGLKKRE (187 aa). Helical transmembrane passes span 71–91, 92–112, and 166–186; these read KISA…EWIN, FHFL…QFVW, and FLMA…CNFL.

The protein localises to the endoplasmic reticulum membrane. The protein is Reticulon-like protein B8 (RTNLB8) of Arabidopsis thaliana (Mouse-ear cress).